We begin with the raw amino-acid sequence, 159 residues long: Superoxide dismutase [Cu-Zn] (159 aa).

3 residues coordinate Cu cation: histidine 47, histidine 49, and histidine 64. Residues cysteine 58 and cysteine 150 are joined by a disulfide bond. Zn(2+)-binding residues include histidine 64, histidine 72, histidine 81, and aspartate 84. Histidine 121 lines the Cu cation pocket.

It belongs to the Cu-Zn superoxide dismutase family. Requires Cu cation as cofactor. It depends on Zn(2+) as a cofactor.

It localises to the cytoplasm. It carries out the reaction 2 superoxide + 2 H(+) = H2O2 + O2. Destroys radicals which are normally produced within the cells and which are toxic to biological systems. This Haemonchus contortus (Barber pole worm) protein is Superoxide dismutase [Cu-Zn] (SOD).